A 368-amino-acid chain; its full sequence is Glutamate 5-kinase (368 aa).

Position 10 (K10) interacts with ATP. Substrate is bound by residues S50, D137, and N149. Residue 169–170 (TD) participates in ATP binding. Residues 276-354 (RGTLVLDDGA…ESIVRELGYM (79 aa)) form the PUA domain.

This sequence belongs to the glutamate 5-kinase family.

Its subcellular location is the cytoplasm. The catalysed reaction is L-glutamate + ATP = L-glutamyl 5-phosphate + ADP. It participates in amino-acid biosynthesis; L-proline biosynthesis; L-glutamate 5-semialdehyde from L-glutamate: step 1/2. In terms of biological role, catalyzes the transfer of a phosphate group to glutamate to form L-glutamate 5-phosphate. The chain is Glutamate 5-kinase from Pseudomonas savastanoi pv. phaseolicola (strain 1448A / Race 6) (Pseudomonas syringae pv. phaseolicola (strain 1448A / Race 6)).